The primary structure comprises 407 residues: Myeloid cell nuclear differentiation antigen (407 aa).

Residues 1–88 (MVNEYKKILL…VNNLRKEKSK (88 aa)) form the Pyrin domain. The disordered stretch occupies residues 108–207 (EVGLAAPAPT…RQVDARRNVP (100 aa)). Residues 131–137 (PVAQKRK) carry the Nuclear localization signal motif. The span at 139 to 148 (PNKEKTEAKR) shows a compositional bias: basic and acidic residues. Positions 177-190 (QTSSSTPSNTSFTP) are enriched in low complexity. One can recognise an HIN-200 domain in the interval 196–394 (AQRQVDARRN…CGSHSFIKVI (199 aa)).

In terms of assembly, participates in a ternary complex with YY1 and the YY1 target DNA element. Binds nucleolin and nucleophosmin/NPM/B23. As to expression, expressed constitutively in cells of the myeloid lineage. Found in promyelocyte stage cells as well as in all other stage cells including peripheral blood monocytes and granulocytes. Also appears in myeloblast cells in some cases of acute myeloid Leukemia.

The protein localises to the nucleus. Its subcellular location is the cytoplasm. Functionally, may act as a transcriptional activator/repressor in the myeloid lineage. Plays a role in the granulocyte/monocyte cell-specific response to interferon. Stimulates the DNA binding of the transcriptional repressor protein YY1. In Homo sapiens (Human), this protein is Myeloid cell nuclear differentiation antigen (MNDA).